The chain runs to 461 residues: Alcaligin biosynthesis enzyme (461 aa).

9 to 15 serves as a coordination point for FAD; it reads VAIGIGP.

Belongs to the lysine N(6)-hydroxylase/L-ornithine N(5)-oxygenase family. FAD is required as a cofactor.

The protein operates within siderophore biosynthesis; alcaligin biosynthesis. This Bordetella bronchiseptica (strain ATCC BAA-588 / NCTC 13252 / RB50) (Alcaligenes bronchisepticus) protein is Alcaligin biosynthesis enzyme (alcA).